Consider the following 374-residue polypeptide: Beta-1,3-N-acetylglucosaminyltransferase lunatic fringe (374 aa).

Residues 1-8 (MLKTYRGK) lie on the Cytoplasmic side of the membrane. The helical; Signal-anchor for type II membrane protein transmembrane segment at 9-29 (VVVSLAGATVTCLGFLLFLSQ) threads the bilayer. The Lumenal segment spans residues 30–374 (HQRIQADGMQ…TPWCPPQVAY (345 aa)). Asn-40 carries N-linked (GlcNAc...) asparagine glycosylation. The tract at residues 80–100 (RSRREADKPSEAPGAATDAPP) is disordered. Arg-123 contacts substrate. An N-linked (GlcNAc...) asparagine glycan is attached at Asn-162. Disulfide bonds link Cys-163/Cys-174 and Cys-192/Cys-255. Asp-196 contributes to the substrate binding site. Asp-197 lines the Mn(2+) pocket. Asp-285 is an active-site residue. Residue His-309 participates in Mn(2+) binding. Cys-359 and Cys-368 form a disulfide bridge.

It belongs to the glycosyltransferase 31 family. The cofactor is Mn(2+). Co(2+) serves as cofactor. Post-translationally, a soluble form may be derived from the membrane form by proteolytic processing. As to expression, in the embryo, expressed along the A-P axis of the neural tube, within the lateral plate mesoderm, in the presomitic mesoderm and the somites, in specific rhombomeres of the hindbrain (even-numbered rhombomeres) and in the otic vesicles.

Its subcellular location is the golgi apparatus membrane. It catalyses the reaction 3-O-(alpha-L-fucosyl)-L-threonyl-[EGF-like domain protein] + UDP-N-acetyl-alpha-D-glucosamine = 3-O-(N-acetyl-beta-D-glucosaminyl-(1-&gt;3)-alpha-L-fucosyl)-L-threonyl-[EGF-like domain protein] + UDP + H(+). The catalysed reaction is 3-O-(alpha-L-fucosyl)-L-seryl-[EGF-like domain protein] + UDP-N-acetyl-alpha-D-glucosamine = 3-O-(N-acetyl-beta-D-glucosaminyl-(1-&gt;3)-alpha-L-fucosyl)-L-seryl-[EGF-like domain protein] + UDP + H(+). Glycosyltransferase that initiates the elongation of O-linked fucose residues attached to EGF-like repeats in the extracellular domain of Notch molecules. Involved in the correct formation of boundaries in the somites and hindbrain. Required for Delta-Notch-mediated induction of hypochord cells at the lateral borders of the midline precursor domain. This chain is Beta-1,3-N-acetylglucosaminyltransferase lunatic fringe (lfng), found in Danio rerio (Zebrafish).